The sequence spans 230 residues: MPAGGLIVAIDGPSGTGKSTTSRALATRLSAKYLDTGAMYRVATLHVLNQGIDPADSAAVIAATAVLPLSISDDPASTEVLLAGVDVQKDIRGPEVTQNVSAVSAIPEVRENLVALQRALAAKAHRCVVEGRDIGTAVLVDAPIKAFLTASAEVRAQRRFDQDTAAGRDVDFDAVLADVVRRDELDSTRAASPLKPADDAHIVDTSDMTMDQVLDHLIHLVEASAERSNQ.

Gly12 to Thr20 is a binding site for ATP.

This sequence belongs to the cytidylate kinase family. Type 1 subfamily.

The protein resides in the cytoplasm. It carries out the reaction CMP + ATP = CDP + ADP. It catalyses the reaction dCMP + ATP = dCDP + ADP. This is Cytidylate kinase from Corynebacterium glutamicum (strain ATCC 13032 / DSM 20300 / JCM 1318 / BCRC 11384 / CCUG 27702 / LMG 3730 / NBRC 12168 / NCIMB 10025 / NRRL B-2784 / 534).